A 571-amino-acid polypeptide reads, in one-letter code: Chaperonin GroEL 1 (571 aa).

ATP is bound by residues 29-32, Lys-50, 86-90, Gly-416, and Asp-498; these read TLGP and DGTTT.

Belongs to the chaperonin (HSP60) family. As to quaternary structure, forms a cylinder of 14 subunits composed of two heptameric rings stacked back-to-back. Interacts with the co-chaperonin GroES.

The protein localises to the cytoplasm. It catalyses the reaction ATP + H2O + a folded polypeptide = ADP + phosphate + an unfolded polypeptide.. Together with its co-chaperonin GroES, plays an essential role in assisting protein folding. The GroEL-GroES system forms a nano-cage that allows encapsulation of the non-native substrate proteins and provides a physical environment optimized to promote and accelerate protein folding. The protein is Chaperonin GroEL 1 of Rhodopirellula baltica (strain DSM 10527 / NCIMB 13988 / SH1).